The primary structure comprises 139 residues: Gonadotropin subunit beta-2 (139 aa).

Residues 1–24 (MFPLVLSLFLGATSDIWPLAPAEA) form the signal peptide. 6 disulfide bridges follow: Cys30-Cys78, Cys44-Cys93, Cys47-Cys131, Cys55-Cys109, Cys59-Cys111, and Cys114-Cys121. Asn34 carries N-linked (GlcNAc...) asparagine glycosylation.

It belongs to the glycoprotein hormones subunit beta family. As to quaternary structure, heterodimer of an alpha and a beta chain.

The protein resides in the secreted. Its function is as follows. Involved in gametogenesis and steroidogenesis. In Morone saxatilis (Striped bass), this protein is Gonadotropin subunit beta-2 (cgbb).